The sequence spans 611 residues: Developmental and secondary metabolism regulator veA (611 aa).

3 disordered regions span residues 1–57, 222–497, and 511–611; these read MNRK…RPVD, RRRE…ASFD, and LEAS…PGHA. Polar residues predominate over residues 14 to 23; that stretch reads KSSATRTTND. Positions 24–216 constitute a Velvet domain; that stretch reads GRAITYEMQV…AEQGCRVRIR (193 aa). The Nuclear localization signal signature appears at 38–43; it reads QRARAC. A compositionally biased stretch (low complexity) spans 242-254; the sequence is AARARASATPDPS. Polar residues predominate over residues 274 to 290; that stretch reads SASNASHQSLGSISRRP. The span at 330-340 shows a compositional bias: low complexity; sequence YPPNQFVQQQP. A compositionally biased stretch (pro residues) spans 341–361; it reads PMQPPLPQYQPPNYPAPPPPV. The span at 362–377 shows a compositional bias: low complexity; it reads TAAQQPQPAQSYYNYP. Residues 419 to 434 are compositionally biased toward polar residues; that stretch reads RNSQQIPPTSQPTAYT. Low complexity-rich tracts occupy residues 435–452 and 461–471; these read QPMQ…QHYQ and QASQHSSYSSM. The tract at residues 455–499 is PEST; that stretch reads PPPPPSQASQHSSYSSMDLYNSRPAPIEPHHHGNTPASKASFDLP. A compositionally biased stretch (polar residues) spans 511-533; the sequence is LEASSPTSVAPTNAYFSGGQTPI.

Belongs to the velvet family. VeA subfamily. Component of the heterotrimeric velvet complex composed of laeA, veA and velB; VeA acting as a bridging protein between laeA and velB.

It is found in the nucleus. The protein localises to the cytoplasm. Its function is as follows. Component of the velvet transcription factor complex that controls sexual/asexual developmental ratio in response to light, promoting sexual development in the darkness while stimulating asexual sporulation under illumination. The velvet complex hat acts as a global regulator for secondary metabolite gene expression. Controls the expression of the dothistromin gene cluster. Regulates hyphal growth and pigment formation. Acts as a positive regulator of virulence. The protein is Developmental and secondary metabolism regulator veA of Dothistroma septosporum (strain NZE10 / CBS 128990) (Red band needle blight fungus).